Reading from the N-terminus, the 410-residue chain is Indoleamine 2,3-dioxygenase nanC (410 aa).

Residue His-309 coordinates heme.

The protein belongs to the indoleamine 2,3-dioxygenase family. The cofactor is heme.

It catalyses the reaction D-tryptophan + O2 = N-formyl-D-kynurenine. The enzyme catalyses L-tryptophan + O2 = N-formyl-L-kynurenine. It functions in the pathway secondary metabolite biosynthesis. In terms of biological role, indoleamine 2,3-dioxygenase; part of the gene cluster that mediates the biosynthesis of the benzazepine alkaloid nanangelenin A which contains an unprecedented 3,4-dihydro-1-benzazepine-2,5-dione-N-prenyl-N-acetoxy-anthranilamide scaffold. The first step of nanangelenin biosynthesis is catalyzed by the indoleamine 2,3-dioxygenase nanC which produces N-formyl-kynurenine through the catabolism of tryptophan. The two-module NRPS nanA then utilizes anthranilate (Ant) and L-kynurenine (L-Kyn) to assemble the dipeptide product nanangelenin B. The first adenylation domain of nanA (A1) loads anthranilate onto the T1 domain, while A2 loads kynurenine, generated through spontaneous nonenzymatic deformylation of the nanC-supplied N-formyl-kynurenine. The peptide bond formation between the tethered amino acids is catalyzed by the first condensation domain (C1) between anthranilate's carbonyl carbon and kynurenine's aliphatic primary amine. The second C domain (C2) catalyzes the final cyclization event between the aromatic amine of kynurenine and the tethered carbonyl carbon, yielding nanangelenin B. The terminal T3 domain enhances the catalytic efficiency of C2, suggesting the T2-tethered Ant-L-Kyn is transferred to T3 prior to cyclization by C2. Once released from nanA, nanangelenin B is then prenylated by the prenyltransferase nanD to form nanangelenin C. Nanangelenin C is then N-hydroxylated by the FAD-dependent monooxygenase nanF and further acetylated by the acetyltransferase nanB to yield nanangelenin F. Finally, the N-methyltransferase nanE methylates the amide nitrogen of 1-benzazepine to convert nanangelenin F into nanangelenin A. NanE is also able to methylate most of the intermediates of the pathway such as nanangelenin B and nanangelenin C to produce nanangelenin D and nanangelenin E, respectively. This Aspergillus nanangensis protein is Indoleamine 2,3-dioxygenase nanC.